The chain runs to 271 residues: Phosphonoacetaldehyde hydrolase (271 aa).

Asp12 serves as the catalytic Nucleophile. Mg(2+)-binding residues include Asp12 and Ala14. The active-site Schiff-base intermediate with substrate is the Lys54. Residue Asp188 participates in Mg(2+) binding.

This sequence belongs to the HAD-like hydrolase superfamily. PhnX family. Homodimer. Requires Mg(2+) as cofactor.

It carries out the reaction phosphonoacetaldehyde + H2O = acetaldehyde + phosphate + H(+). In terms of biological role, involved in phosphonate degradation. The protein is Phosphonoacetaldehyde hydrolase of Aliivibrio salmonicida (strain LFI1238) (Vibrio salmonicida (strain LFI1238)).